The primary structure comprises 310 residues: B3 domain-containing transcription factor NGA1 (310 aa).

Residues 1–26 (MMTDLSLTRDEDEEEAKPLAEEEGAR) form a disordered region. Residues 16–26 (AKPLAEEEGAR) show a composition bias toward basic and acidic residues. Residues 35 to 141 (FDKVVTPSDV…RLFIDWRRRP (107 aa)) constitute a DNA-binding region (TF-B3). Low complexity predominate over residues 251–268 (ESGMTNSTEEESSSSGGS). The disordered stretch occupies residues 251–310 (ESGMTNSTEEESSSSGGSLPRGGGGGASSSSFFQLRLGSSSEDDHFTKKGKSSLSFDLDQ).

In terms of assembly, interacts with BRX. Interacts with BZIP30.

Its subcellular location is the nucleus. In terms of biological role, regulates lateral organ growth. Functionally redundant with NGA2, NGA3 and NGA4. This chain is B3 domain-containing transcription factor NGA1 (NGA1), found in Arabidopsis thaliana (Mouse-ear cress).